Here is a 199-residue protein sequence, read N- to C-terminus: Transcriptional regulatory protein EntR (199 aa).

Residues 3–124 enclose the Response regulatory domain; it reads KILVIDRCHF…TLSHTIQEAL (122 aa). Asp8 is modified (4-aspartylphosphate). The region spanning 133–198 is the HTH luxR-type domain; sequence PKNATPLLTP…SPFLSLPGKG (66 aa). The segment at residues 157–176 is a DNA-binding region (H-T-H motif); sequence NNAIAAALSIHGKTVYTYKR.

Functionally, may serve to repress the entericidin locus in C.freundii. This is Transcriptional regulatory protein EntR (ecnR) from Citrobacter freundii.